Here is a 462-residue protein sequence, read N- to C-terminus: UDP-N-acetylmuramoylalanine--D-glutamate ligase (462 aa).

ATP is bound at residue 117–123 (GTNGKTT).

This sequence belongs to the MurCDEF family.

The protein localises to the cytoplasm. The enzyme catalyses UDP-N-acetyl-alpha-D-muramoyl-L-alanine + D-glutamate + ATP = UDP-N-acetyl-alpha-D-muramoyl-L-alanyl-D-glutamate + ADP + phosphate + H(+). The protein operates within cell wall biogenesis; peptidoglycan biosynthesis. Functionally, cell wall formation. Catalyzes the addition of glutamate to the nucleotide precursor UDP-N-acetylmuramoyl-L-alanine (UMA). This chain is UDP-N-acetylmuramoylalanine--D-glutamate ligase, found in Parasynechococcus marenigrum (strain WH8102).